Reading from the N-terminus, the 354-residue chain is Fructose-bisphosphate aldolase (354 aa).

Serine 61 serves as a coordination point for D-glyceraldehyde 3-phosphate. Catalysis depends on aspartate 104, which acts as the Proton donor. Histidine 105, aspartate 139, glutamate 169, and histidine 221 together coordinate Zn(2+). Residue glycine 222 coordinates dihydroxyacetone phosphate. Histidine 260 contacts Zn(2+). Dihydroxyacetone phosphate is bound by residues 261-263 (GGS) and 282-285 (NIDT).

This sequence belongs to the class II fructose-bisphosphate aldolase family. In terms of assembly, homodimer. The cofactor is Zn(2+).

The catalysed reaction is beta-D-fructose 1,6-bisphosphate = D-glyceraldehyde 3-phosphate + dihydroxyacetone phosphate. The protein operates within carbohydrate degradation; glycolysis; D-glyceraldehyde 3-phosphate and glycerone phosphate from D-glucose: step 4/4. Its function is as follows. Catalyzes the aldol condensation of dihydroxyacetone phosphate (DHAP or glycerone-phosphate) with glyceraldehyde 3-phosphate (G3P) to form fructose 1,6-bisphosphate (FBP) in gluconeogenesis and the reverse reaction in glycolysis. This is Fructose-bisphosphate aldolase (fba) from Campylobacter jejuni subsp. jejuni serotype O:23/36 (strain 81-176).